A 175-amino-acid chain; its full sequence is ATP-dependent protease subunit HslV (175 aa).

Thr2 is a catalytic residue. Na(+) is bound by residues Gly158, Cys161, and Thr164.

This sequence belongs to the peptidase T1B family. HslV subfamily. In terms of assembly, a double ring-shaped homohexamer of HslV is capped on each side by a ring-shaped HslU homohexamer. The assembly of the HslU/HslV complex is dependent on binding of ATP.

The protein localises to the cytoplasm. The catalysed reaction is ATP-dependent cleavage of peptide bonds with broad specificity.. With respect to regulation, allosterically activated by HslU binding. Functionally, protease subunit of a proteasome-like degradation complex believed to be a general protein degrading machinery. This Haemophilus influenzae (strain ATCC 51907 / DSM 11121 / KW20 / Rd) protein is ATP-dependent protease subunit HslV.